Reading from the N-terminus, the 380-residue chain is MDEHFIKIHKWLYPVSWIYGAVVTVRNKLFDWGFLRSKSFGVPVICIGNLSVGGTGKTPHTEYLIKLLRDNYHVAVLSRGYKRHSRGYVLATPQSTARSIGDEPYQMHTKFPSVTLAVDENRCHGIEQLLSIKEPSIEVVLLDDAFQHRYVKPGLSILLTDYHRLFCDDTLLPAGRLRESVNGKNRAQIVIVTKCPQDIKPIDYNIITKRLNLYPYQQLYFSSFRYGNLQPVFPSANSEIDSTVNELPLSALTNTDILLVTGIASPAPILEELKMYTDQIDSLSFDDHHHFSHRDIQQIKERFGKLKGEHKLIVTTEKDATRLIHHPVLSEELKPFIYALPIEIEILQNQQDKFNQHIIGYVRENTRNSSFSERENAHQS.

51–58 (SVGGTGKT) serves as a coordination point for ATP.

Belongs to the LpxK family.

The catalysed reaction is a lipid A disaccharide + ATP = a lipid IVA + ADP + H(+). Its pathway is glycolipid biosynthesis; lipid IV(A) biosynthesis; lipid IV(A) from (3R)-3-hydroxytetradecanoyl-[acyl-carrier-protein] and UDP-N-acetyl-alpha-D-glucosamine: step 6/6. In terms of biological role, transfers the gamma-phosphate of ATP to the 4'-position of a tetraacyldisaccharide 1-phosphate intermediate (termed DS-1-P) to form tetraacyldisaccharide 1,4'-bis-phosphate (lipid IVA). This is Tetraacyldisaccharide 4'-kinase from Bacteroides thetaiotaomicron (strain ATCC 29148 / DSM 2079 / JCM 5827 / CCUG 10774 / NCTC 10582 / VPI-5482 / E50).